The chain runs to 209 residues: GTP-binding nuclear protein Ran1B (209 aa).

Residues 1 to 162 enclose the Small GTPase Ran-type domain; it reads NFKLVIVGDG…LYLARKLAGD (162 aa). Residue 9–16 coordinates GTP; that stretch reads DGGTGKTT. A switch-I region spans residues 28 to 36; sequence KKYEPTIGV. GTP is bound by residues Gly-59, 113–116, and 141–143; these read NKVD and SAK. The segment at 59 to 75 is switch-II; that stretch reads GQEKFGGLRDGYYIHGQ. Positions 187–200 are enriched in low complexity; it reads QHEAELAAAASQPL. Residues 187–209 are disordered; the sequence is QHEAELAAAASQPLPDDDDDAFD.

The protein belongs to the small GTPase superfamily. Ran family. In terms of assembly, found in a nuclear export complex with RanGTP, exportin and pre-miRNA.

Its subcellular location is the nucleus. In terms of biological role, GTP-binding protein involved in nucleocytoplasmic transport. Required for the import of protein into the nucleus and also for RNA export. Involved in chromatin condensation and control of cell cycle. This is GTP-binding nuclear protein Ran1B (RAN1B) from Lotus japonicus (Lotus corniculatus var. japonicus).